The following is a 220-amino-acid chain: Endonuclease NucS (220 aa).

Belongs to the NucS endonuclease family.

The protein localises to the cytoplasm. Functionally, cleaves both 3' and 5' ssDNA extremities of branched DNA structures. This is Endonuclease NucS from Mycobacterium leprae (strain TN).